Here is a 92-residue protein sequence, read N- to C-terminus: Muconolactone Delta-isomerase (92 aa).

Belongs to the muconolactone Delta-isomerase family. As to quaternary structure, homodecamer.

The enzyme catalyses (S)-muconolactone = (4,5-dihydro-5-oxofuran-2-yl)-acetate. It participates in aromatic compound metabolism; beta-ketoadipate pathway; 5-oxo-4,5-dihydro-2-furylacetate from catechol: step 3/3. The sequence is that of Muconolactone Delta-isomerase (catC) from Cupriavidus pinatubonensis (strain JMP 134 / LMG 1197) (Cupriavidus necator (strain JMP 134)).